Reading from the N-terminus, the 119-residue chain is Large ribosomal subunit protein bL20 (119 aa).

This sequence belongs to the bacterial ribosomal protein bL20 family.

Its function is as follows. Binds directly to 23S ribosomal RNA and is necessary for the in vitro assembly process of the 50S ribosomal subunit. It is not involved in the protein synthesizing functions of that subunit. This chain is Large ribosomal subunit protein bL20, found in Bradyrhizobium diazoefficiens (strain JCM 10833 / BCRC 13528 / IAM 13628 / NBRC 14792 / USDA 110).